The following is a 354-amino-acid chain: Histidinol-phosphate aminotransferase (354 aa).

Lys210 carries the N6-(pyridoxal phosphate)lysine modification.

The protein belongs to the class-II pyridoxal-phosphate-dependent aminotransferase family. Histidinol-phosphate aminotransferase subfamily. As to quaternary structure, homodimer. It depends on pyridoxal 5'-phosphate as a cofactor.

It carries out the reaction L-histidinol phosphate + 2-oxoglutarate = 3-(imidazol-4-yl)-2-oxopropyl phosphate + L-glutamate. It functions in the pathway amino-acid biosynthesis; L-histidine biosynthesis; L-histidine from 5-phospho-alpha-D-ribose 1-diphosphate: step 7/9. This chain is Histidinol-phosphate aminotransferase, found in Clostridium botulinum (strain Okra / Type B1).